Here is a 95-residue protein sequence, read N- to C-terminus: Alpha-bungarotoxin isoform V31 (95 aa).

A signal peptide spans 1–21; sequence MKTLLLTLVVVTIVCLDLGYT. Cystine bridges form between Cys24–Cys44, Cys37–Cys65, Cys50–Cys54, Cys69–Cys80, and Cys81–Cys86.

The protein belongs to the three-finger toxin family. Long-chain subfamily. Type II alpha-neurotoxin sub-subfamily. Monomer in solution, homodimer in crystal state. Expressed by the venom gland.

The protein localises to the secreted. Its function is as follows. Binds with high affinity to muscular (alpha-1/CHRNA1) and neuronal (alpha-7/CHRNA7) nicotinic acetylcholine receptor (nAChR) and inhibits acetylcholine from binding to the receptor, thereby impairing neuromuscular and neuronal transmission. The chain is Alpha-bungarotoxin isoform V31 from Bungarus multicinctus (Many-banded krait).